We begin with the raw amino-acid sequence, 279 residues long: Diaminopimelate epimerase (279 aa).

The substrate site is built by Asn-13, Gln-46, and Asn-66. Cys-75 (proton donor) is an active-site residue. Residues 76–77 (GN), Asn-161, Asn-194, and 212–213 (ER) each bind substrate. The active-site Proton acceptor is Cys-221. 222 to 223 (GT) is a binding site for substrate.

Belongs to the diaminopimelate epimerase family. In terms of assembly, homodimer.

The protein localises to the cytoplasm. It catalyses the reaction (2S,6S)-2,6-diaminopimelate = meso-2,6-diaminopimelate. The protein operates within amino-acid biosynthesis; L-lysine biosynthesis via DAP pathway; DL-2,6-diaminopimelate from LL-2,6-diaminopimelate: step 1/1. Functionally, catalyzes the stereoinversion of LL-2,6-diaminopimelate (L,L-DAP) to meso-diaminopimelate (meso-DAP), a precursor of L-lysine and an essential component of the bacterial peptidoglycan. This is Diaminopimelate epimerase from Alkalilimnicola ehrlichii (strain ATCC BAA-1101 / DSM 17681 / MLHE-1).